The sequence spans 717 residues: F-box only protein 42 (717 aa).

Positions 1 to 30 (MASSSDSEDDSFMAVDQEETVLEGTMEQDE) are enriched in acidic residues. The tract at residues 1–47 (MASSSDSEDDSFMAVDQEETVLEGTMEQDEEPHPVLEAEETRHNRSM) is disordered. Over residues 31–43 (EPHPVLEAEETRH) the composition is skewed to basic and acidic residues. Positions 44–93 (NRSMSELPEEVLEYILSFLSPYQEHKTAALVCKQWYRLIKGVAHQCYHGF) constitute an F-box domain. Kelch repeat units lie at residues 132 to 184 (SMYV…VYKD), 186 to 242 (LVLF…VIDD), 244 to 293 (MIVF…VIDD), and 295 to 342 (TILI…LWCH). 2 disordered regions span residues 361–472 (RAPL…SAAE) and 508–539 (PASSSNPMDGMDNRTVGGSMRHPPEQTNGVHT). Residues 363–376 (PLSPSLNSRPSPIS) are compositionally biased toward low complexity. Phosphoserine is present on residues Ser-365 and Ser-373. Thr-378 is subject to Phosphothreonine. Composition is skewed to polar residues over residues 416–426 (QRQTPSGSREG) and 455–469 (SLDSPVQAISPSTPS). At Ser-552 the chain carries Phosphoserine. Low complexity predominate over residues 570-596 (GPSASAALSPPLGSSPGSPGSQSLSSG). Residues 570 to 635 (GPSASAALSP…PQSLNVGKPL (66 aa)) are disordered.

As to quaternary structure, component of some SCF complex, composed of CUL1, SKP1, RBX1 and FBXO42. Interacts (via the kelch domain) with p53/TP53; interaction is direct.

Its function is as follows. Substrate-recognition component of some SCF (SKP1-CUL1-F-box protein)-type E3 ubiquitin ligase complex. Specifically recognizes p53/TP53, promoting its ubiquitination and degradation. This is F-box only protein 42 (FBXO42) from Pongo abelii (Sumatran orangutan).